Consider the following 347-residue polypeptide: Protein RecA (347 aa).

Position 66–73 (66–73 (GPESSGKT)) interacts with ATP.

The protein belongs to the RecA family.

It is found in the cytoplasm. Its function is as follows. Can catalyze the hydrolysis of ATP in the presence of single-stranded DNA, the ATP-dependent uptake of single-stranded DNA by duplex DNA, and the ATP-dependent hybridization of homologous single-stranded DNAs. It interacts with LexA causing its activation and leading to its autocatalytic cleavage. In Burkholderia cepacia (Pseudomonas cepacia), this protein is Protein RecA.